The primary structure comprises 457 residues: Probable ubiquitin carboxyl-terminal hydrolase 16 (457 aa).

A disordered region spans residues 34–97; that stretch reads VSSPSVPEGT…DGANDFVDED (64 aa). Residues 45-67 are compositionally biased toward polar residues; the sequence is TVLNNPKQSTVSRKSFSAPTSPT. Ser-61 is modified (phosphoserine). Thr-64 is subject to Phosphothreonine. At Ser-65 the chain carries Phosphoserine. The region spanning 125–429 is the USP domain; the sequence is PGLVNLGNTC…QAYILQYKRK (305 aa). Cys-134 acts as the Nucleophile in catalysis. His-388 functions as the Proton acceptor in the catalytic mechanism. The disordered stretch occupies residues 434–457; it reads SKHKLNTENTVTKTSNKKRRKISF. Positions 448-457 are enriched in basic residues; it reads SNKKRRKISF.

It belongs to the peptidase C19 family.

It catalyses the reaction Thiol-dependent hydrolysis of ester, thioester, amide, peptide and isopeptide bonds formed by the C-terminal Gly of ubiquitin (a 76-residue protein attached to proteins as an intracellular targeting signal).. The sequence is that of Probable ubiquitin carboxyl-terminal hydrolase 16 (ubp16) from Schizosaccharomyces pombe (strain 972 / ATCC 24843) (Fission yeast).